We begin with the raw amino-acid sequence, 704 residues long: Elongation factor G (704 aa).

Residues 8 to 291 (DKVRNIGIMA…AVIDYLASPV (284 aa)) form the tr-type G domain. Residues 17 to 24 (AHIDAGKT), 90 to 94 (DTPGH), and 144 to 147 (NKMD) contribute to the GTP site.

The protein belongs to the TRAFAC class translation factor GTPase superfamily. Classic translation factor GTPase family. EF-G/EF-2 subfamily.

The protein localises to the cytoplasm. Functionally, catalyzes the GTP-dependent ribosomal translocation step during translation elongation. During this step, the ribosome changes from the pre-translocational (PRE) to the post-translocational (POST) state as the newly formed A-site-bound peptidyl-tRNA and P-site-bound deacylated tRNA move to the P and E sites, respectively. Catalyzes the coordinated movement of the two tRNA molecules, the mRNA and conformational changes in the ribosome. This is Elongation factor G from Chlorobaculum parvum (strain DSM 263 / NCIMB 8327) (Chlorobium vibrioforme subsp. thiosulfatophilum).